Consider the following 42-residue polypeptide: MQDAKTYLSIAPVLATLWFGFLVGSLIEINRFFPNALILPSL.

A helical transmembrane segment spans residues 7-27 (YLSIAPVLATLWFGFLVGSLI).

Belongs to the PsaJ family.

Its subcellular location is the plastid membrane. May help in the organization of the PsaE and PsaF subunits. This chain is Photosystem I reaction center subunit IX, found in Aneura mirabilis (Parasitic liverwort).